Here is a 341-residue protein sequence, read N- to C-terminus: S-adenosylmethionine:tRNA ribosyltransferase-isomerase (341 aa).

It belongs to the QueA family. As to quaternary structure, monomer.

It is found in the cytoplasm. The enzyme catalyses 7-aminomethyl-7-carbaguanosine(34) in tRNA + S-adenosyl-L-methionine = epoxyqueuosine(34) in tRNA + adenine + L-methionine + 2 H(+). The protein operates within tRNA modification; tRNA-queuosine biosynthesis. In terms of biological role, transfers and isomerizes the ribose moiety from AdoMet to the 7-aminomethyl group of 7-deazaguanine (preQ1-tRNA) to give epoxyqueuosine (oQ-tRNA). In Halothermothrix orenii (strain H 168 / OCM 544 / DSM 9562), this protein is S-adenosylmethionine:tRNA ribosyltransferase-isomerase.